We begin with the raw amino-acid sequence, 1522 residues long: Myosin-15 (1522 aa).

A Myosin N-terminal SH3-like domain is found at 12–61 (RKGDKVWVEDKDLAWIAADVLDSFDNKLHVETSTGKKVFVSPEKLFRRDP). In terms of domain architecture, Myosin motor spans 67 to 737 (NGVDDMTKLT…QIGILDSRRA (671 aa)). Residues 161–168 (GESGAGKT) and 214–222 (NDNSSRFGK) contribute to the ATP site. Actin-binding stretches follow at residues 499–533 (LIEKKPIGVIALLDEACMFPRSTHESFSMKLFQNF), 535–558 (FHPRLEKPKFSETDFTLSHYAGKV), 593–618 (FPSAPEESTRSSYKFSSVSSRFKQQL), and 618–640 (LQALMETLSKTEPHYVRCVKPNS). IQ domains are found at residues 763-792 (ARASAISIQAYCRGCLSRNAYATRRNAAAA), 788-817 (NAAAAVLVQKHVRRWLSRCAFVKLVSAAIV), 811-840 (LVSAAIVLQSCIRADSTRLKFSHQKEHRAA), 836-865 (EHRAASLIQAHWRIHKFRSAFRHRQSSIIA), and 859-888 (RQSSIIAIQCRWRQKLAKREFRKLKQVANE). The stretch at 889–1059 (AGALRLAKTK…NQVLMQKTLI (171 aa)) forms a coiled coil. The Dilute domain occupies 1164–1456 (NIIIEGINEA…VSQMRVLVDK (293 aa)).

The protein belongs to the TRAFAC class myosin-kinesin ATPase superfamily. Myosin family. Plant myosin class XI subfamily. In terms of assembly, homodimer. Interacts with MYOB1 and MYOB7. Interacts with WIT1 and WIT2. Core component of the LINC complex which is composed of inner nuclear membrane SUN domain-containing proteins coupled to outer nuclear membrane WIP and WIT proteins. The LINC complex also involves nucleoskeletal proteins CRWN/LINC and possibly KAKU4 and the cytoskeletal myosin KAKU1.

Its subcellular location is the cytoplasm. It localises to the nucleus membrane. Functionally, myosin heavy chain that is required for the cell cycle-regulated transport of various organelles and proteins for their segregation. Functions by binding with its tail domain to receptor proteins on organelles and exerting force with its N-terminal motor domain against actin filaments, thereby transporting its cargo along polarized actin cables. Involved in trafficking of Golgi stacks and mitochondria. Plays a role in nuclear shape determination. Drives nuclear movement along actin filaments. As component of the SUN-WIP-WIT2-KAKU1 complex, mediates the transfer of cytoplasmic forces to the nuclear envelope (NE), leading to nuclear shape changes. The polypeptide is Myosin-15 (XI-I) (Arabidopsis thaliana (Mouse-ear cress)).